The chain runs to 568 residues: CDK5 and ABL1 enzyme substrate 1 (568 aa).

Positions 1 to 31 (MAAATATAGTAACSSSSSSRGGSTDAAATSG) are enriched in low complexity. Disordered stretches follow at residues 1–94 (MAAA…PGAR) and 130–169 (PSLV…QEEL). Positions 1–98 (MAAATATAGT…TKPGARARLS (98 aa)) are interaction with TDRD7. Over residues 33–45 (QPPPPPPATAPPE) the composition is skewed to pro residues. A compositionally biased stretch (basic and acidic residues) spans 46–56 (PLRKPRMDPRR). The interval 140-427 (PSQPPRSAPA…TTVIDYVKPS (288 aa)) is interaction with CDK3. Ser-248 bears the Phosphoserine mark. Ser-274 carries the post-translational modification Phosphoserine; by CDK2 and CDK3. The residue at position 350 (Thr-350) is a Phosphothreonine.

Belongs to the cyclin family. Found in a complex with p53/TP53. Found in a number of complexes with CDK2, CDK3, CDK5, ABL1, TDRD7, CDK17, CCNA1, CCNE1 and TP73. Interacts with CDK2, CDK3, CDK5, ABL1 and TDRD7. In terms of processing, phosphorylated on Ser-274 by CCNE1/CDK3. Phosphorylated on serine/threonine residues by CDK5 and on tyrosine residues by ABL1. Also phosphorylated in vitro by CCNA1/CDK2, CCNE1/CDK2, CCNA1/CDK3 and CCNE1/CDK3. As to expression, ubiquitous. Expressed in postnatal day 1 (P1), in postmitotic neurons of the subplate, cortex (V/VI) and marginal zone; in postnatal day 7 (P7), in all layers of the cerebral cortex and in the CA1 and CA2 regions of the hippocampus (at protein level). Highly expressed in brain, kidney, liver and lung.

The protein localises to the nucleus. It is found in the cytoplasm. The protein resides in the cell projection. Its subcellular location is the growth cone. In terms of biological role, cyclin-dependent kinase binding protein. Enhances cyclin-dependent kinase tyrosine phosphorylation by nonreceptor tyrosine kinases, such as that of CDK5 by activated ABL1, which leads to increased CDK5 activity and is critical for neuronal development, and that of CDK2 by WEE1, which leads to decreased CDK2 activity and growth inhibition. Positively affects neuronal outgrowth. Plays a role as a regulator for p53/p73-induced cell death. This Mus musculus (Mouse) protein is CDK5 and ABL1 enzyme substrate 1 (Cables1).